We begin with the raw amino-acid sequence, 775 residues long: Acylamino-acid-releasing enzyme 1 (775 aa).

Catalysis depends on charge relay system residues S627, D718, and H750.

Belongs to the peptidase S9C family. In terms of assembly, homotetramer.

The protein localises to the cytoplasm. The catalysed reaction is Cleavage of an N-acetyl or N-formyl amino acid from the N-terminus of a polypeptide.. Functionally, catalyzes the hydrolysis of the N-terminal peptide bond of an N-acetylated peptide to generate an N-acetylated amino acid and a peptide with a free N-terminus. The protein is Acylamino-acid-releasing enzyme 1 of Oryza sativa subsp. japonica (Rice).